The sequence spans 166 residues: MGPILVLLVLLSLLEPGSANYDPCLDFDPENCTLTFAPDTSRICGVLIKCGWECRSVEITHNNKTWNNTLSTTWEPGVPEWYTVSVRGPDGSIRISNNTFIFSEMCDLAMFMSKQYSLWPPSKDNIVTFSIAYCLCACLLTALLCVCIHLLVTTRIKNANNKEKMP.

Residues 1–19 (MGPILVLLVLLSLLEPGSA) form the signal peptide. Residues 20–131 (NYDPCLDFDP…SKDNIVTFSI (112 aa)) lie on the Lumenal side of the membrane. A glycan (N-linked (GlcNAc...) asparagine; by host) is linked at asparagine 31. 2 cysteine pairs are disulfide-bonded: cysteine 32-cysteine 50 and cysteine 44-cysteine 106. N-linked (GlcNAc...) asparagine; by host glycosylation is found at asparagine 63, asparagine 67, and asparagine 97. Residues 132-152 (AYCLCACLLTALLCVCIHLLV) form a helical membrane-spanning segment. Residues 153–166 (TTRIKNANNKEKMP) lie on the Cytoplasmic side of the membrane. A Di-lysine motif motif is present at residues 162-166 (KEKMP).

The protein belongs to the adenoviridae E19 family. Post-translationally, both disulfide bonds are absolutely critical for the interaction with MHC antigens. N-glycosylated; high-mannose.

The protein resides in the host endoplasmic reticulum membrane. Its function is as follows. Binds and retains class I heavy chains in the endoplasmic reticulum during the early period of virus infection, thereby impairing their transport to the cell surface. Also delays the expression of class I alleles that it cannot affect by direct retention. Binds transporters associated with antigen processing (TAP) and acts as a tapasin inhibitor, preventing class I/TAP association. In consequence, infected cells are masked for immune recognition by cytotoxic T-lymphocytes. The protein is Early E3 18.5 kDa glycoprotein of Human adenovirus B serotype 11 (strain Slobiski) (HAdV-11).